We begin with the raw amino-acid sequence, 239 residues long: 2',3'-cyclic-nucleotide 3'-phosphodiesterase (239 aa).

Catalysis depends on proton donor/acceptor residues His39 and His150.

This sequence belongs to the 2H phosphoesterase superfamily. CPD1 family.

The protein resides in the golgi apparatus. The enzyme catalyses ADP-alpha-D-ribose 1'',2''-cyclic phosphate + H2O = ADP-alpha-D-ribose 1''-phosphate + H(+). The catalysed reaction is 2',3'-cyclophospho-AMP + H2O = adenosine 2'-phosphate + H(+). It carries out the reaction 2',3'-cyclophospho-GMP + H2O = guanosine 2'-phosphate + H(+). It catalyses the reaction 2',3'-cyclophospho-UMP + H2O = uridine 2'-phosphate + H(+). The enzyme catalyses 2',3'-cyclophospho-CMP + H2O = cytidine 2'-phosphate + H(+). The catalysed reaction is a nucleoside 2',3'-cyclic phosphate + H2O = a nucleoside 2'-phosphate + H(+). Involved in the metabolism of ADP-ribose 1',2'-cyclic phosphate which is produced as a consequence of tRNA splicing. The sequence is that of 2',3'-cyclic-nucleotide 3'-phosphodiesterase from Saccharomyces cerevisiae (strain ATCC 204508 / S288c) (Baker's yeast).